The chain runs to 187 residues: Probable chorismate pyruvate-lyase (187 aa).

Substrate contacts are provided by arginine 77, leucine 115, and glutamate 174.

This sequence belongs to the UbiC family.

It is found in the cytoplasm. It carries out the reaction chorismate = 4-hydroxybenzoate + pyruvate. The protein operates within cofactor biosynthesis; ubiquinone biosynthesis. Removes the pyruvyl group from chorismate, with concomitant aromatization of the ring, to provide 4-hydroxybenzoate (4HB) for the ubiquinone pathway. The protein is Probable chorismate pyruvate-lyase of Shewanella sp. (strain ANA-3).